The sequence spans 390 residues: Galactokinase (390 aa).

33 to 36 (EHTD) is a binding site for substrate. ATP contacts are provided by residues Ser-67 and 124 to 130 (GAGLSSS). 2 residues coordinate Mg(2+): Ser-130 and Glu-162. The active-site Proton acceptor is Asp-174. Tyr-224 is a substrate binding site.

The protein belongs to the GHMP kinase family. GalK subfamily.

The protein localises to the cytoplasm. The catalysed reaction is alpha-D-galactose + ATP = alpha-D-galactose 1-phosphate + ADP + H(+). It participates in carbohydrate metabolism; galactose metabolism. Its function is as follows. Catalyzes the transfer of the gamma-phosphate of ATP to D-galactose to form alpha-D-galactose-1-phosphate (Gal-1-P). This Bacillus subtilis (strain 168) protein is Galactokinase.